Reading from the N-terminus, the 341-residue chain is Small ribosomal subunit biogenesis GTPase RsgA (341 aa).

Residues 112-268 form the CP-type G domain; sequence RQQLIAANLD…LIDTPGMREL (157 aa). Residues 157–160 and 210–218 each bind GTP; these read TKVD and GSSGAGKST. Zn(2+) is bound by residues Cys-290, Cys-295, His-297, and Cys-303.

This sequence belongs to the TRAFAC class YlqF/YawG GTPase family. RsgA subfamily. In terms of assembly, monomer. Associates with 30S ribosomal subunit, binds 16S rRNA. The cofactor is Zn(2+).

Its subcellular location is the cytoplasm. Its function is as follows. One of several proteins that assist in the late maturation steps of the functional core of the 30S ribosomal subunit. Helps release RbfA from mature subunits. May play a role in the assembly of ribosomal proteins into the subunit. Circularly permuted GTPase that catalyzes slow GTP hydrolysis, GTPase activity is stimulated by the 30S ribosomal subunit. This Xylella fastidiosa (strain 9a5c) protein is Small ribosomal subunit biogenesis GTPase RsgA.